A 109-amino-acid chain; its full sequence is Small ribosomal subunit protein uS10 (109 aa).

The protein belongs to the universal ribosomal protein uS10 family. In terms of assembly, part of the 30S ribosomal subunit.

In terms of biological role, involved in the binding of tRNA to the ribosomes. The chain is Small ribosomal subunit protein uS10 from Koribacter versatilis (strain Ellin345).